We begin with the raw amino-acid sequence, 222 residues long: Isoprenyl transferase (222 aa).

The active site involves aspartate 12. Aspartate 12 is a binding site for Mg(2+). Residues 13-16 (GNRR), tryptophan 17, and 57-59 (STE) contribute to the substrate site. Residue asparagine 60 is the Proton acceptor of the active site. Residues tryptophan 61, arginine 63, arginine 171, and 177 to 179 (RLS) each bind substrate. Glutamate 190 contacts Mg(2+).

Belongs to the UPP synthase family. Homodimer. The cofactor is Mg(2+).

In terms of biological role, catalyzes the condensation of isopentenyl diphosphate (IPP) with allylic pyrophosphates generating different type of terpenoids. This is Isoprenyl transferase (uppS) from Campylobacter jejuni subsp. jejuni serotype O:2 (strain ATCC 700819 / NCTC 11168).